The sequence spans 1037 residues: Probable inorganic carbon transporter subunit DabA 2 (1037 aa).

Zn(2+) is bound by residues C460, D462, H719, and C734.

Belongs to the inorganic carbon transporter (TC 9.A.2) DabA family. Forms a complex with DabB. Zn(2+) serves as cofactor.

Its subcellular location is the cell inner membrane. Part of an energy-coupled inorganic carbon pump. This chain is Probable inorganic carbon transporter subunit DabA 2, found in Nitrobacter winogradskyi (strain ATCC 25391 / DSM 10237 / CIP 104748 / NCIMB 11846 / Nb-255).